A 241-amino-acid chain; its full sequence is MSDKPLYSRVLLKVSGEALMGPAQYGIDLDTVDRVARDIKQAIDAGVQVCLVIGGGNIFRGLSGAAKGMERASADYMGMLATVMNALAMQTALEAIGVPTRVQSAIPMMTVCEPYIRRRAVRHMEKGRVVIFAAGTGNPFFTTDTAAALRAVEMGCDALLKGTQVDGVYSADPHKVANAERYDRLTYMDVLARDLKVMDASAIALARENAIPIIVYSIDEPGGFAEVLTGAGRCTIISDAA.

13–16 (KVSG) provides a ligand contact to ATP. G55 contributes to the UMP binding site. 2 residues coordinate ATP: G56 and R60. UMP is bound by residues D75 and 136–143 (TGNPFFTT). ATP-binding residues include T163, Q164, Y169, and D172.

The protein belongs to the UMP kinase family. As to quaternary structure, homohexamer.

It is found in the cytoplasm. The catalysed reaction is UMP + ATP = UDP + ADP. It functions in the pathway pyrimidine metabolism; CTP biosynthesis via de novo pathway; UDP from UMP (UMPK route): step 1/1. Its activity is regulated as follows. Inhibited by UTP. In terms of biological role, catalyzes the reversible phosphorylation of UMP to UDP. The sequence is that of Uridylate kinase from Parvibaculum lavamentivorans (strain DS-1 / DSM 13023 / NCIMB 13966).